The primary structure comprises 367 residues: MEAERQNQIAARLADYAEREQALRRYLDYDAKTERLHVVNAELEDPAVWNDPKHAQDLGREKKSLEDVVQTLTELGQGVADALELFELAAADEDDATLESIENDANTFQERLEGLEFRRMFSNPADPLNCFLDIQAGAGGTEAQDWASMLLRQYLKYAERKGFKAEVLEESEGEIAGIKSATIKLEGEYAFGYLRTETGVHRLVRKSPFDSSGGRHTSFASVFVYPEVDESFEVEVNPADLRVDTYRASGAGGQHINKTDSAVRITHMPSGIVVQCQNDRSQHRNRAEAMQMLKSKLYELEMRKRMAEQQKLEDSKTDVGWGHQIRSYVLDQSRIKDLRTNVEISNTQKVLDGDLDPFIQASLKQGV.

Position 254 is an N5-methylglutamine (Q254).

Belongs to the prokaryotic/mitochondrial release factor family. In terms of processing, methylated by PrmC. Methylation increases the termination efficiency of RF2.

The protein localises to the cytoplasm. Functionally, peptide chain release factor 2 directs the termination of translation in response to the peptide chain termination codons UGA and UAA. The polypeptide is Peptide chain release factor 2 (Bordetella avium (strain 197N)).